The sequence spans 123 residues: Large ribosomal subunit protein bL19 (123 aa).

The protein belongs to the bacterial ribosomal protein bL19 family.

This protein is located at the 30S-50S ribosomal subunit interface and may play a role in the structure and function of the aminoacyl-tRNA binding site. The sequence is that of Large ribosomal subunit protein bL19 from Bdellovibrio bacteriovorus (strain ATCC 15356 / DSM 50701 / NCIMB 9529 / HD100).